A 118-amino-acid polypeptide reads, in one-letter code: T cell receptor gamma variable 2 (118 aa).

Residues 1–17 (MQWALAVLLAFLSPASQ) form the signal peptide. Residues 18-118 (KSSNLEGRTK…GVYYCATWDG (101 aa)) form the Ig-like domain. Cysteines 41 and 113 form a disulfide.

As to quaternary structure, gamma-delta TR is a heterodimer composed of a gamma and delta chain; disulfide-linked. The gamma-delta TR is associated with the transmembrane signaling CD3 coreceptor proteins following the stoichiometry: a single gamma-delta TR heterodimer associates with one CD3D-CD3E heterodimer, one CD3G-CD3E heterodimer and one CD247 homodimer forming a stable octameric structure. Upon activation, gamma-delta TR complex associates with FCER1G to initiate intracellular signaling.

The protein resides in the cell membrane. V region of the variable domain of T cell receptor (TR) gamma chain that participates in the antigen recognition. Gamma-delta TRs recognize a variety of self and foreign non-peptide antigens frequently expressed at the epithelial boundaries between the host and external environment, including endogenous lipids presented by MH-like protein CD1D and phosphoantigens presented by butyrophilin-like molecule BTN3A1. Upon antigen recognition induces rapid, innate-like immune responses involved in pathogen clearance and tissue repair. Binding of gamma-delta TR complex to antigen triggers phosphorylation of immunoreceptor tyrosine-based activation motifs (ITAMs) in the CD3 chains by the LCK and FYN kinases, allowing the recruitment, phosphorylation, and activation of ZAP70 that facilitates phosphorylation of the scaffolding proteins LCP2 and LAT. This lead to the formation of a supramolecular signalosome that recruits the phospholipase PLCG1, resulting in calcium mobilization and ERK activation, ultimately leading to T cell expansion and differentiation into effector cells. Gamma-delta TRs are produced through somatic rearrangement of a limited repertoire of variable (V), diversity (D), and joining (J) genes. The potential diversity of gamma-delta TRs is conferred by the unique ability to rearrange (D) genes in tandem and to utilize all three reading frames. The combinatorial diversity is considerably increased by the sequence exonuclease trimming and random nucleotide (N) region additions which occur during the V-(D)-J rearrangements. In Homo sapiens (Human), this protein is T cell receptor gamma variable 2.